Consider the following 336-residue polypeptide: NAC domain-containing protein 100 (336 aa).

Residues L16 to K166 enclose the NAC domain. The DNA-binding element occupies V113 to K172. Residues R313–Y336 are disordered.

The protein localises to the nucleus. Binds to the promoter regions of genes involved in chlorophyll catabolic processes, such as NYC1, SGR1, SGR2 and PAO. In Arabidopsis thaliana (Mouse-ear cress), this protein is NAC domain-containing protein 100.